A 650-amino-acid chain; its full sequence is MQKSADKSLKDRYLDLLSQQFNTKEELATEIINLESILELPKGTEHFVSDLHGEFHAFQHVLRNGSGNVRSKINDIFQDTLTRKEINEFSALVYYPEEKLKIIKNSFSSKSELNEWYITTINRLIKLITYASSKYTRTKLRKSLPKNYVFIIEELLYKSNKYNNKHSYYETLINQIIELEQSDDLIIGLSFTVQHLVVDHLHVVGDIYDRGPEPDKIMETLIDYPSVDIQWGNHDVLWIGAYAGSKVCLANLLRICARYDNLDIIEDAYGINLRPLLTLAEKHYDGKNKAFRPKNAEGLTELELEQITKIHQAIAIIQFKLEAPIIKRRPTFEMEERLVLESINYEKNEATLYGKTYPLENTCFQTIDPNGPNKLTDEESEVMDKLLLSVQQSEKLKRHMTFLMQKGTLYLPYNGNLLIHGCIPVDENGEMESMVINDVKCYGRDLLDHFEDYVREAFDHKDIQDDLATDLVWYLWTGKYSSLFGKRAMTTFERYFIKDKTAHKETKNPYYHLREDVNMCKKMLKDFGLDPEQGHIINGHTPVKEIDGEDPIKAEGKMIVIDGGFSKAYQSTTGIAGYTLLYNSFGMQLVAHQHFNSKKHVLLNGADELSIRRVVDKELQRQKIRHTNTGQDIQEKIDILKELMHDRYVN.

Belongs to the FBPase class 3 family. Mn(2+) is required as a cofactor.

It carries out the reaction beta-D-fructose 1,6-bisphosphate + H2O = beta-D-fructose 6-phosphate + phosphate. It participates in carbohydrate biosynthesis; gluconeogenesis. The sequence is that of Fructose-1,6-bisphosphatase class 3 from Staphylococcus saprophyticus subsp. saprophyticus (strain ATCC 15305 / DSM 20229 / NCIMB 8711 / NCTC 7292 / S-41).